We begin with the raw amino-acid sequence, 242 residues long: NAD(P)H-hydrate epimerase (242 aa).

Residues 11–221 (AKALDAELMS…KVITKKFNLS (211 aa)) form the YjeF N-terminal domain. (6S)-NADPHX is bound at residue 61–65 (NNGGD). K(+) contacts are provided by Asn62 and Asp128. (6S)-NADPHX contacts are provided by residues 132–138 (GFSFKGP) and Asp161. Position 164 (Ser164) interacts with K(+).

Belongs to the NnrE/AIBP family. The cofactor is K(+).

The protein resides in the cytoplasm. Its subcellular location is the mitochondrion. It is found in the nucleus. The catalysed reaction is (6R)-NADHX = (6S)-NADHX. It carries out the reaction (6R)-NADPHX = (6S)-NADPHX. In terms of biological role, catalyzes the epimerization of the S- and R-forms of NAD(P)HX, a damaged form of NAD(P)H that is a result of enzymatic or heat-dependent hydration. This is a prerequisite for the S-specific NAD(P)H-hydrate dehydratase to allow the repair of both epimers of NAD(P)HX. May have a role in meiosis. In Schizosaccharomyces pombe (strain 972 / ATCC 24843) (Fission yeast), this protein is NAD(P)H-hydrate epimerase (mug182).